A 246-amino-acid chain; its full sequence is Triosephosphate isomerase (246 aa).

9–11 is a binding site for substrate; sequence NWK. His99 functions as the Electrophile in the catalytic mechanism. The active-site Proton acceptor is the Glu168. Substrate-binding positions include Gly174, Ser207, and 228 to 229; that span reads GG.

It belongs to the triosephosphate isomerase family. In terms of assembly, homodimer.

Its subcellular location is the cytoplasm. The catalysed reaction is D-glyceraldehyde 3-phosphate = dihydroxyacetone phosphate. The protein operates within carbohydrate biosynthesis; gluconeogenesis. It functions in the pathway carbohydrate degradation; glycolysis; D-glyceraldehyde 3-phosphate from glycerone phosphate: step 1/1. Its function is as follows. Involved in the gluconeogenesis. Catalyzes stereospecifically the conversion of dihydroxyacetone phosphate (DHAP) to D-glyceraldehyde-3-phosphate (G3P). This Prochlorococcus marinus (strain NATL2A) protein is Triosephosphate isomerase.